A 468-amino-acid chain; its full sequence is Effector protein hopD2 (468 aa).

Residues 1–20 (MNPLQPIQHSITNSQMSGGQ) show a composition bias toward polar residues. The disordered stretch occupies residues 1-35 (MNPLQPIQHSITNSQMSGGQQLEAEGSQAHNSYSH). The Tyrosine-protein phosphatase domain occupies 143–468 (DASSPPSAND…TQWRAKIALE (326 aa)). Cys-378 functions as the Phosphocysteine intermediate in the catalytic mechanism.

In terms of assembly, interacts with EFR and FLS2 (via the kinase and cytoplasmic domains).

It is found in the secreted. The catalysed reaction is O-phospho-L-tyrosyl-[protein] + H2O = L-tyrosyl-[protein] + phosphate. Inhibited by sodium orthovanadate. Functionally, effector showing tyrosine-phosphatase activity required for host defense suppression. Functions inside plant cells causing suppression of HR (hypersensitive response), PR1 gene expression and oxidative burst probably by interfering with a MAPK (mitogen-activated protein kinase) pathway. MAPK cascades are known to activate defense-related transcription factors. Inhibits plant pattern-recognition receptors (PRRs) activation. The protein is Effector protein hopD2 (hopD2) of Pseudomonas syringae pv. tomato (strain ATCC BAA-871 / DC3000).